Consider the following 785-residue polypeptide: 1-phosphatidylinositol 4,5-bisphosphate phosphodiesterase delta-3 (785 aa).

A disordered region spans residues methionine 1–glycine 43. The PH domain maps to serine 65–alanine 168. The tract at residues lysine 69–proline 97 is substrate binding. Serine 101 bears the Phosphoserine mark. 3 consecutive EF-hand domains span residues arginine 178–aspartate 213, methionine 214–arginine 249, and leucine 246–aspartate 281. Positions 191, 193, 195, 197, 202, 227, 229, 231, 233, and 238 each coordinate Ca(2+). One can recognise a PI-PLC X-box domain in the interval glutamine 333 to lysine 478. Histidine 348 is an active-site residue. Ca(2+)-binding residues include asparagine 349, glutamate 378, and aspartate 380. Histidine 393 is an active-site residue. Glutamate 427 lines the Ca(2+) pocket. Substrate-binding residues include lysine 476 and lysine 478. Over residues arginine 484–aspartate 493 the composition is skewed to basic and acidic residues. Residues arginine 484–alanine 517 are disordered. A Phosphoserine modification is found at serine 492. The span at arginine 494–glutamate 509 shows a compositional bias: acidic residues. One can recognise a PI-PLC Y-box domain in the interval leucine 524–arginine 640. Serine 553 provides a ligand contact to substrate. Position 569 is a phosphoserine (serine 569). Residue arginine 580 participates in substrate binding. One can recognise a C2 domain in the interval proline 636–serine 765. Ca(2+) contacts are provided by isoleucine 679, aspartate 681, asparagine 705, aspartate 734, tyrosine 735, and aspartate 736.

Ca(2+) is required as a cofactor. Expressed in cerebellum and cerebral cortex.

It is found in the membrane. The protein resides in the cytoplasm. The protein localises to the cleavage furrow. It catalyses the reaction a 1,2-diacyl-sn-glycero-3-phospho-(1D-myo-inositol-4,5-bisphosphate) + H2O = 1D-myo-inositol 1,4,5-trisphosphate + a 1,2-diacyl-sn-glycerol + H(+). Strongly activated by phosphatidic acid. Inhibited by phosphatidylethanolamine (PtdEtn), phosphatidylcholine (PtdCho), sphingomyelin and phosphatidylserine (PtdSer). In terms of biological role, hydrolyzes the phosphatidylinositol 4,5-bisphosphate (PIP2) to generate 2 second messenger molecules diacylglycerol (DAG) and inositol 1,4,5-trisphosphate (IP3). DAG mediates the activation of protein kinase C (PKC), while IP3 releases Ca(2+) from intracellular stores. Essential for trophoblast and placental development. May participate in cytokinesis by hydrolyzing PIP2 at the cleavage furrow. Regulates neurite outgrowth through the inhibition of RhoA/Rho kinase signaling. The chain is 1-phosphatidylinositol 4,5-bisphosphate phosphodiesterase delta-3 from Mus musculus (Mouse).